The following is a 200-amino-acid chain: ATP-dependent Clp protease proteolytic subunit 2 (200 aa).

Ser96 acts as the Nucleophile in catalysis. His121 is an active-site residue.

The protein belongs to the peptidase S14 family. In terms of assembly, fourteen ClpP subunits assemble into 2 heptameric rings which stack back to back to give a disk-like structure with a central cavity, resembling the structure of eukaryotic proteasomes.

It is found in the cytoplasm. The catalysed reaction is Hydrolysis of proteins to small peptides in the presence of ATP and magnesium. alpha-casein is the usual test substrate. In the absence of ATP, only oligopeptides shorter than five residues are hydrolyzed (such as succinyl-Leu-Tyr-|-NHMec, and Leu-Tyr-Leu-|-Tyr-Trp, in which cleavage of the -Tyr-|-Leu- and -Tyr-|-Trp bonds also occurs).. Its function is as follows. Cleaves peptides in various proteins in a process that requires ATP hydrolysis. Has a chymotrypsin-like activity. Plays a major role in the degradation of misfolded proteins. The protein is ATP-dependent Clp protease proteolytic subunit 2 of Synechococcus sp. (strain JA-2-3B'a(2-13)) (Cyanobacteria bacterium Yellowstone B-Prime).